The sequence spans 75 residues: Tautomerase PptA (75 aa).

The Proton acceptor; via imino nitrogen role is filled by P2.

It belongs to the 4-oxalocrotonate tautomerase family. PptA subfamily. In terms of assembly, homodimer.

It is found in the cytoplasm. The chain is Tautomerase PptA from Klebsiella pneumoniae subsp. pneumoniae (strain ATCC 700721 / MGH 78578).